The primary structure comprises 198 residues: Probable GTP-binding protein EngB (198 aa).

The EngB-type G domain occupies 22-195 (DLPEIALAGR…WKAIHKMTKT (174 aa)). GTP is bound by residues 30–37 (GRSNVGKS), 57–61 (GKTQT), 75–78 (DVPG), 142–145 (TKAD), and 174–176 (FSS). The Mg(2+) site is built by Ser37 and Thr59.

This sequence belongs to the TRAFAC class TrmE-Era-EngA-EngB-Septin-like GTPase superfamily. EngB GTPase family. Mg(2+) serves as cofactor.

Necessary for normal cell division and for the maintenance of normal septation. The sequence is that of Probable GTP-binding protein EngB from Bacillus cereus (strain G9842).